Consider the following 209-residue polypeptide: NADH-ubiquinone oxidoreductase subunit 9 (209 aa).

It belongs to the complex I 30 kDa subunit family. In terms of assembly, complex I is composed of about 30 different subunits.

The protein resides in the mitochondrion inner membrane. The catalysed reaction is a ubiquinone + NADH + 5 H(+)(in) = a ubiquinol + NAD(+) + 4 H(+)(out). Core subunit of the mitochondrial membrane respiratory chain NADH dehydrogenase (Complex I) that is believed to belong to the minimal assembly required for catalysis. Complex I functions in the transfer of electrons from NADH to the respiratory chain. The immediate electron acceptor for the enzyme is believed to be ubiquinone. The polypeptide is NADH-ubiquinone oxidoreductase subunit 9 (NAD9) (Paramecium primaurelia).